A 362-amino-acid chain; its full sequence is Glutamate 5-kinase (362 aa).

Lysine 3 serves as a coordination point for ATP. Substrate is bound by residues serine 43, aspartate 128, and asparagine 140. ATP-binding positions include 160–161 and 202–208; these read TD and TGGMRTK. Residues 267–348 enclose the PUA domain; that stretch reads PGTILIDAGA…REIEPILGYS (82 aa).

Belongs to the glutamate 5-kinase family.

The protein resides in the cytoplasm. The catalysed reaction is L-glutamate + ATP = L-glutamyl 5-phosphate + ADP. Its pathway is amino-acid biosynthesis; L-proline biosynthesis; L-glutamate 5-semialdehyde from L-glutamate: step 1/2. In terms of biological role, catalyzes the transfer of a phosphate group to glutamate to form L-glutamate 5-phosphate. The sequence is that of Glutamate 5-kinase from Xanthomonas campestris pv. campestris (strain 8004).